The following is a 430-amino-acid chain: Enolase (430 aa).

Q167 provides a ligand contact to (2R)-2-phosphoglycerate. E209 functions as the Proton donor in the catalytic mechanism. The Mg(2+) site is built by D245, E286, and D313. (2R)-2-phosphoglycerate is bound by residues K338, R367, S368, and K389. Catalysis depends on K338, which acts as the Proton acceptor.

This sequence belongs to the enolase family. Requires Mg(2+) as cofactor.

The protein localises to the cytoplasm. The protein resides in the secreted. Its subcellular location is the cell surface. The enzyme catalyses (2R)-2-phosphoglycerate = phosphoenolpyruvate + H2O. The protein operates within carbohydrate degradation; glycolysis; pyruvate from D-glyceraldehyde 3-phosphate: step 4/5. Catalyzes the reversible conversion of 2-phosphoglycerate (2-PG) into phosphoenolpyruvate (PEP). It is essential for the degradation of carbohydrates via glycolysis. This Parasynechococcus marenigrum (strain WH8102) protein is Enolase.